The primary structure comprises 393 residues: 4-hydroxyphenylpyruvate dioxygenase (393 aa).

Thr-2 carries the post-translational modification N-acetylthreonine. VOC domains lie at His-18 to Lys-149 and Ile-180 to Lys-338. Lys-132 is modified (N6-succinyllysine). Position 183 (His-183) interacts with Fe cation. Residues Ser-211, Ser-226, and Ser-250 each carry the phosphoserine modification. His-266 and Glu-349 together coordinate Fe cation.

The protein belongs to the 4HPPD family. In terms of assembly, homodimer. Fe cation is required as a cofactor.

The protein resides in the cytoplasm. It localises to the endoplasmic reticulum membrane. It is found in the golgi apparatus membrane. The enzyme catalyses 3-(4-hydroxyphenyl)pyruvate + O2 = homogentisate + CO2. It functions in the pathway amino-acid degradation; L-phenylalanine degradation; acetoacetate and fumarate from L-phenylalanine: step 3/6. Its function is as follows. Catalyzes the conversion of 4-hydroxyphenylpyruvic acid to homogentisic acid, one of the steps in tyrosine catabolism. The sequence is that of 4-hydroxyphenylpyruvate dioxygenase (Hpd) from Rattus norvegicus (Rat).